The primary structure comprises 365 residues: Heat-inducible transcription repressor HrcA (365 aa).

It belongs to the HrcA family.

Functionally, negative regulator of class I heat shock genes (grpE-dnaK-dnaJ and groELS operons). Prevents heat-shock induction of these operons. This is Heat-inducible transcription repressor HrcA from Nodularia spumigena.